The chain runs to 372 residues: Chaperone protein DnaJ (372 aa).

The J domain maps to 5 to 69 (DYYEVLGLSK…QKKAQYDQFG (65 aa)). The segment at 129-211 (GAEKEISVKK…CGGTGRKVKT (83 aa)) adopts a CR-type zinc-finger fold. Zn(2+) contacts are provided by Cys-142, Cys-145, Cys-159, Cys-162, Cys-185, Cys-188, Cys-199, and Cys-202. CXXCXGXG motif repeat units lie at residues 142–149 (CDTCDGSG), 159–166 (CSTCGGRG), 185–192 (CPDCGGTG), and 199–206 (CSDCGGTG).

This sequence belongs to the DnaJ family. In terms of assembly, homodimer. Requires Zn(2+) as cofactor.

The protein resides in the cytoplasm. Participates actively in the response to hyperosmotic and heat shock by preventing the aggregation of stress-denatured proteins and by disaggregating proteins, also in an autonomous, DnaK-independent fashion. Unfolded proteins bind initially to DnaJ; upon interaction with the DnaJ-bound protein, DnaK hydrolyzes its bound ATP, resulting in the formation of a stable complex. GrpE releases ADP from DnaK; ATP binding to DnaK triggers the release of the substrate protein, thus completing the reaction cycle. Several rounds of ATP-dependent interactions between DnaJ, DnaK and GrpE are required for fully efficient folding. Also involved, together with DnaK and GrpE, in the DNA replication of plasmids through activation of initiation proteins. The chain is Chaperone protein DnaJ from Macrococcus caseolyticus (strain JCSC5402) (Macrococcoides caseolyticum).